We begin with the raw amino-acid sequence, 184 residues long: MKPLVAFLVVLSIFGIQSQAEEIFNIFVPSKNGGNIQETVTIDNQQNTATINIHSGSCSSTTIFDYKHGYIASRVLSRRACYVIKMDHKAIPALDKLQRFLYEKQTMNAIDSPEYTWVRYNPLKSLITKVDWFLFGSPIRQLCKHMPLYEGEVATKPKEVSTGACAKVGLLGILGVSICGGIHL.

An N-terminal signal peptide occupies residues 1–20 (MKPLVAFLVVLSIFGIQSQA). The BRICHOS domain occupies 54-151 (HSGSCSSTTI…LCKHMPLYEG (98 aa)). Cys81 and Cys143 are joined by a disulfide.

Heterodimer with TFF1; disulfide linked. Interacts with TFF2. In terms of tissue distribution, stomach foveolar epithelium and duodenal Brunner's glands.

The protein localises to the secreted. Its subcellular location is the golgi apparatus. The sequence is that of Gastrokine-2 (Gkn2) from Mus musculus (Mouse).